The sequence spans 309 residues: Metal ABC transporter substrate-binding lipoprotein FimA (309 aa).

The N-terminal stretch at 1-20 (MKKIASVLALFVALLFGLLA) is a signal peptide. A lipid anchor (N-palmitoyl cysteine) is attached at C21. Residue C21 is the site of S-diacylglycerol cysteine attachment. A divalent metal cation contacts are provided by H67, H139, E205, and D280.

Belongs to the bacterial solute-binding protein 9 family. Lipoprotein receptor antigen (Lrai) subfamily.

Its subcellular location is the cell membrane. Part of an ATP-binding cassette (ABC) transport system involved in metal import. Binds a metal with high affinity and specificity and delivers it to the membrane permease for translocation into the cytoplasm. Also acts as an adhesin which is involved on adherence to extracellular matrix. It is an important factor in pathogenesis and infection. May contribute to the formation and accumulation of dental plaque. The sequence is that of Metal ABC transporter substrate-binding lipoprotein FimA (fimA) from Streptococcus parasanguinis.